Consider the following 349-residue polypeptide: Protein-glutamate methylesterase/protein-glutamine glutaminase 3 (349 aa).

Positions 2-119 constitute a Response regulatory domain; it reads DVLIVDDSPV…HPDFERDVES (118 aa). At Asp52 the chain carries 4-aspartylphosphate. Positions 157 to 340 constitute a CheB-type methylesterase domain; it reads EGFQPGVIAI…LSPPRIAALL (184 aa). Catalysis depends on residues Ser169, His196, and Asp289.

This sequence belongs to the CheB family. Phosphorylated by CheA. Phosphorylation of the N-terminal regulatory domain activates the methylesterase activity.

The protein resides in the cytoplasm. The catalysed reaction is [protein]-L-glutamate 5-O-methyl ester + H2O = L-glutamyl-[protein] + methanol + H(+). The enzyme catalyses L-glutaminyl-[protein] + H2O = L-glutamyl-[protein] + NH4(+). In terms of biological role, involved in chemotaxis. Part of a chemotaxis signal transduction system that modulates chemotaxis in response to various stimuli. Catalyzes the demethylation of specific methylglutamate residues introduced into the chemoreceptors (methyl-accepting chemotaxis proteins or MCP) by CheR. Also mediates the irreversible deamidation of specific glutamine residues to glutamic acid. This chain is Protein-glutamate methylesterase/protein-glutamine glutaminase 3, found in Hahella chejuensis (strain KCTC 2396).